Here is a 228-residue protein sequence, read N- to C-terminus: Somatolactin (228 aa).

The signal sequence occupies residues 1 to 24 (MFSIRMNKVLQGFVCLMLTHRIVG). 3 cysteine pairs are disulfide-bonded: C29–C38, C88–C200, and C217–C225. Residues N141 and N177 are each glycosylated (N-linked (GlcNAc...) asparagine).

Belongs to the somatotropin/prolactin family.

Its subcellular location is the secreted. The sequence is that of Somatolactin from Anguilla anguilla (European freshwater eel).